We begin with the raw amino-acid sequence, 697 residues long: Long-chain-fatty-acid--CoA ligase 6 (697 aa).

The helical; Signal-anchor for type III membrane protein transmembrane segment at 25-45 (LSATTLVSMGALAAILAYWLT) threads the bilayer. At 46 to 697 (HRPKALQPPC…QIEELYSISM (652 aa)) the chain is on the cytoplasmic side.

The protein belongs to the ATP-dependent AMP-binding enzyme family. Mg(2+) serves as cofactor. In terms of tissue distribution, expressed predominantly in brain and, to a much lesser extent, in heart and adrenal.

Its subcellular location is the mitochondrion outer membrane. The protein resides in the peroxisome membrane. It is found in the microsome membrane. It localises to the endoplasmic reticulum membrane. The catalysed reaction is a long-chain fatty acid + ATP + CoA = a long-chain fatty acyl-CoA + AMP + diphosphate. The enzyme catalyses (5Z,8Z,11Z,14Z)-eicosatetraenoate + ATP + CoA = (5Z,8Z,11Z,14Z)-eicosatetraenoyl-CoA + AMP + diphosphate. It carries out the reaction 15-hydroxy-(5Z,8Z,11Z,13E)-eicosatetraenoate + ATP + CoA = 15-hydroxy-(5Z,8Z,11Z,13E)-eicosatetraenoyl-CoA + AMP + diphosphate. It catalyses the reaction 12-hydroxy-(5Z,8Z,10E,14Z)-eicosatetraenoate + ATP + CoA = 12-hydroxy-(5Z,8Z,10E,14Z)-eicosatetraenoyl-CoA + AMP + diphosphate. The catalysed reaction is 5-hydroxy-(6E,8Z,11Z,14Z)-eicosatetraenoate + ATP + CoA = 5-hydroxy-(6E,8Z,11Z,14Z)-eicosatetraenoyl-CoA + AMP + diphosphate. The enzyme catalyses hexadecanoate + ATP + CoA = hexadecanoyl-CoA + AMP + diphosphate. It carries out the reaction (E)-hexadec-2-enoate + ATP + CoA = (2E)-hexadecenoyl-CoA + AMP + diphosphate. Catalyzes the conversion of long-chain fatty acids to their active form acyl-CoA for both synthesis of cellular lipids, and degradation via beta-oxidation. Plays an important role in fatty acid metabolism in brain and the acyl-CoAs produced may be utilized exclusively for the synthesis of the brain lipid. The sequence is that of Long-chain-fatty-acid--CoA ligase 6 from Rattus norvegicus (Rat).